The sequence spans 23 residues: Basic phospholipase A2 homolog Vur-S49 analog (23 aa).

Positions 1–23 (SVLEIGLMLQEETEKNPKTSYSI) are disordered.

Contains 7 disulfide bonds. Expressed by the venom gland.

It is found in the secreted. This is Basic phospholipase A2 homolog Vur-S49 analog from Vipera renardi (Steppe viper).